A 356-amino-acid chain; its full sequence is Histidinol-phosphate aminotransferase (356 aa).

K214 carries the N6-(pyridoxal phosphate)lysine modification.

This sequence belongs to the class-II pyridoxal-phosphate-dependent aminotransferase family. Histidinol-phosphate aminotransferase subfamily. In terms of assembly, homodimer. Requires pyridoxal 5'-phosphate as cofactor.

The catalysed reaction is L-histidinol phosphate + 2-oxoglutarate = 3-(imidazol-4-yl)-2-oxopropyl phosphate + L-glutamate. It functions in the pathway amino-acid biosynthesis; L-histidine biosynthesis; L-histidine from 5-phospho-alpha-D-ribose 1-diphosphate: step 7/9. In Shigella sonnei (strain Ss046), this protein is Histidinol-phosphate aminotransferase.